The chain runs to 244 residues: Glutathione-independent glyoxalase hsp3101 (244 aa).

Catalysis depends on residues Cys139, His140, and Glu173.

It belongs to the peptidase C56 family. HSP31-like subfamily.

The protein resides in the cytoplasm. It is found in the nucleus. It carries out the reaction methylglyoxal + H2O = (R)-lactate + H(+). Catalyzes the conversion of methylglyoxal (MG) to D-lactate in a single glutathione (GSH)-independent step. May play a role in detoxifying endogenously produced glyoxals. Involved in protection against reactive oxygen species (ROS). The sequence is that of Glutathione-independent glyoxalase hsp3101 from Schizosaccharomyces pombe (strain 972 / ATCC 24843) (Fission yeast).